The following is a 204-amino-acid chain: Protein G1-like5 (204 aa).

Disordered stretches follow at residues 1-45 (MEFV…ESQK) and 157-204 (RARG…GAAA). Positions 26-39 (TGATSASAAGASPS) are enriched in low complexity. One can recognise an ALOG domain in the interval 40 to 167 (RYESQKRRDW…ARGVSYEKKK (128 aa)). The Nuclear localization signal signature appears at 165–169 (KKKRK).

This sequence belongs to the plant homeotic and developmental regulators ALOG protein family.

It is found in the nucleus. Its function is as follows. Probable transcription regulator that acts as a developmental regulator by promoting cell growth in response to light. The sequence is that of Protein G1-like5 (G1L5) from Oryza sativa subsp. japonica (Rice).